The primary structure comprises 51 residues: Large ribosomal subunit protein eL39 (51 aa).

This sequence belongs to the eukaryotic ribosomal protein eL39 family.

In Methanosarcina barkeri (strain Fusaro / DSM 804), this protein is Large ribosomal subunit protein eL39.